The primary structure comprises 273 residues: Manganese catalase (273 aa).

Mn(2+) is bound at residue Glu-35. Ca(2+) contacts are provided by Asp-57 and Asp-61. Residues Glu-66, His-69, Glu-149, and His-182 each coordinate Mn(2+). Asn-220, Ser-222, and Gly-224 together coordinate Ca(2+). The tract at residues 254–273 (EKPELKPAPPFVHNTLPGRE) is disordered.

This sequence belongs to the manganese catalase family. Requires Ca(2+) as cofactor. Mn(2+) serves as cofactor.

It carries out the reaction 2 H2O2 = O2 + 2 H2O. Its function is as follows. Catalyzes the decomposition of hydrogen peroxide into water and oxygen. The sequence is that of Manganese catalase (ydbD) from Bacillus subtilis (strain 168).